A 218-amino-acid polypeptide reads, in one-letter code: Uracil-DNA glycosylase (218 aa).

Residue D68 is the Proton acceptor of the active site.

Belongs to the uracil-DNA glycosylase (UDG) superfamily. UNG family. As to quaternary structure, homodimer. Interacts with protein OPG148. Component of the Uracil-DNA glycosylase(UDG)-OPG148-polymerase complex; OPG148 and UDG form a heterodimeric processivity factor that associates with OPG71 to form the processive polymerase holoenzyme.

The enzyme catalyses Hydrolyzes single-stranded DNA or mismatched double-stranded DNA and polynucleotides, releasing free uracil.. Its function is as follows. Plays an essential role in viral replication as a component of the DNA polymerase processivity factor. Excises uracil residues from the DNA which can arise as a result of misincorporation of dUMP residues by DNA polymerase or due to deamination of cytosine. The chain is Uracil-DNA glycosylase (OPG116) from Homo sapiens (Human).